Here is a 611-residue protein sequence, read N- to C-terminus: Dihydroxy-acid dehydratase (611 aa).

Position 81 (Asp81) interacts with Mg(2+). Cys122 provides a ligand contact to [2Fe-2S] cluster. The Mg(2+) site is built by Asp123 and Lys124. Lys124 carries the post-translational modification N6-carboxylysine. Residue Cys195 coordinates [2Fe-2S] cluster. Position 491 (Glu491) interacts with Mg(2+). Ser517 functions as the Proton acceptor in the catalytic mechanism.

Belongs to the IlvD/Edd family. As to quaternary structure, homodimer. The cofactor is [2Fe-2S] cluster. It depends on Mg(2+) as a cofactor.

The enzyme catalyses (2R)-2,3-dihydroxy-3-methylbutanoate = 3-methyl-2-oxobutanoate + H2O. It carries out the reaction (2R,3R)-2,3-dihydroxy-3-methylpentanoate = (S)-3-methyl-2-oxopentanoate + H2O. Its pathway is amino-acid biosynthesis; L-isoleucine biosynthesis; L-isoleucine from 2-oxobutanoate: step 3/4. It participates in amino-acid biosynthesis; L-valine biosynthesis; L-valine from pyruvate: step 3/4. Functionally, functions in the biosynthesis of branched-chain amino acids. Catalyzes the dehydration of (2R,3R)-2,3-dihydroxy-3-methylpentanoate (2,3-dihydroxy-3-methylvalerate) into 2-oxo-3-methylpentanoate (2-oxo-3-methylvalerate) and of (2R)-2,3-dihydroxy-3-methylbutanoate (2,3-dihydroxyisovalerate) into 2-oxo-3-methylbutanoate (2-oxoisovalerate), the penultimate precursor to L-isoleucine and L-valine, respectively. The chain is Dihydroxy-acid dehydratase from Agrobacterium fabrum (strain C58 / ATCC 33970) (Agrobacterium tumefaciens (strain C58)).